Consider the following 153-residue polypeptide: Pheromone-binding protein Gp-9 (153 aa).

Positions Met-1–Ala-19 are cleaved as a signal peptide. 3 disulfides stabilise this stretch: Cys-37–Cys-77, Cys-73–Cys-129, and Cys-118–Cys-138.

The protein belongs to the PBP/GOBP family. In terms of assembly, homodimer.

It is found in the secreted. In terms of biological role, colony queen number, a major feature of social organization, is associated with worker genotype for Gp-9. Colonies are headed by either a single reproductive queen (monogyne form) or multiple queens (polygyne form). Differences in worker Gp-9 genotypes between social forms may cause differences in workers' abilities to recognize queens and regulate their numbers. The chain is Pheromone-binding protein Gp-9 from Solenopsis electra (Fire ant).